The primary structure comprises 603 residues: Elongation factor 4 (603 aa).

The 185-residue stretch at 7–191 (DNIRNFSIVA…AIVTRLPPPK (185 aa)) folds into the tr-type G domain. GTP contacts are provided by residues 19-24 (DHGKST) and 138-141 (NKVD).

The protein belongs to the TRAFAC class translation factor GTPase superfamily. Classic translation factor GTPase family. LepA subfamily.

The protein localises to the cell inner membrane. It catalyses the reaction GTP + H2O = GDP + phosphate + H(+). In terms of biological role, required for accurate and efficient protein synthesis under certain stress conditions. May act as a fidelity factor of the translation reaction, by catalyzing a one-codon backward translocation of tRNAs on improperly translocated ribosomes. Back-translocation proceeds from a post-translocation (POST) complex to a pre-translocation (PRE) complex, thus giving elongation factor G a second chance to translocate the tRNAs correctly. Binds to ribosomes in a GTP-dependent manner. In Rhodopseudomonas palustris (strain ATCC BAA-98 / CGA009), this protein is Elongation factor 4.